Reading from the N-terminus, the 876-residue chain is Alanine--tRNA ligase (876 aa).

Positions 564, 568, 666, and 670 each coordinate Zn(2+).

The protein belongs to the class-II aminoacyl-tRNA synthetase family. As to quaternary structure, homotetramer. The cofactor is Zn(2+).

The protein localises to the cytoplasm. The enzyme catalyses tRNA(Ala) + L-alanine + ATP = L-alanyl-tRNA(Ala) + AMP + diphosphate. Catalyzes the attachment of alanine to tRNA(Ala) in a two-step reaction: alanine is first activated by ATP to form Ala-AMP and then transferred to the acceptor end of tRNA(Ala). Also edits incorrectly charged Ser-tRNA(Ala) and Gly-tRNA(Ala) via its editing domain. This Salmonella paratyphi B (strain ATCC BAA-1250 / SPB7) protein is Alanine--tRNA ligase.